Consider the following 238-residue polypeptide: ATP synthase subunit a (238 aa).

5 helical membrane passes run 18 to 38, 75 to 95, 112 to 132, 179 to 199, and 203 to 223; these read LTILAMSLLTITIIFILVFWA, YSLLMFILFSFVFVANNLGLM, NFGVDITLSLLVAFICHIEGI, VVTGLLLQLAVLSPFTGPLAF, and IVWTAFSMFIGFIQAYVFIIL.

Belongs to the ATPase A chain family. In terms of assembly, F-type ATPases have 2 components, CF(1) - the catalytic core - and CF(0) - the membrane proton channel. CF(1) has five subunits: alpha(3), beta(3), gamma(1), delta(1), epsilon(1). CF(0) has three main subunits: a(1), b(2) and c(9-12). The alpha and beta chains form an alternating ring which encloses part of the gamma chain. CF(1) is attached to CF(0) by a central stalk formed by the gamma and epsilon chains, while a peripheral stalk is formed by the delta and b chains.

Its subcellular location is the cell membrane. Its function is as follows. Key component of the proton channel; it plays a direct role in the translocation of protons across the membrane. This chain is ATP synthase subunit a, found in Streptococcus agalactiae serotype III (strain NEM316).